Reading from the N-terminus, the 213-residue chain is Ras-related protein Rab-25 (213 aa).

Positions 21, 24, 25, 26, 27, 38, 39, 43, and 44 each coordinate GTP. Mg(2+) is bound at residue T26. Short sequence motifs (switch) lie at residues 35-49 (NEFS…GVEF) and 67-84 (DTAG…YYRG). Positions 44 and 67 each coordinate Mg(2+). Positions 70, 125, 126, 128, 156, and 157 each coordinate GTP. 2 S-geranylgeranyl cysteine lipidation sites follow: C209 and C210. Residue C210 is modified to Cysteine methyl ester. Positions 211–213 (ISL) are cleaved as a propeptide — removed in mature form.

Belongs to the small GTPase superfamily. Rab family. As to quaternary structure, interacts (GTP-bound form) with RAB11FIP1, RAB11FIP2, RAB11FIP3 and RAB11FIP4. Interacts (via the hypervariable C-terminal region) with ITGB1 (via the cytoplasmic region); the interaction is GTP-dependent. Interacts with ITGAV. Associates with the integrin alpha-V/beta-1 heterodimer. Interacts with VPS33B. Mg(2+) serves as cofactor.

The protein localises to the cell membrane. The protein resides in the cell projection. Its subcellular location is the pseudopodium membrane. It is found in the cytoplasmic vesicle. It catalyses the reaction GTP + H2O = GDP + phosphate + H(+). Regulated by guanine nucleotide exchange factors (GEFs) which promote the exchange of bound GDP for free GTP. Regulated by GTPase activating proteins (GAPs) which increase the GTP hydrolysis activity. Inhibited by GDP dissociation inhibitors (GDIs) which prevent Rab-GDP dissociation. In terms of biological role, the small GTPases Rab are key regulators of intracellular membrane trafficking, from the formation of transport vesicles to their fusion with membranes. Rabs cycle between an inactive GDP-bound form and an active GTP-bound form that is able to recruit to membranes different set of downstream effectors directly responsible for vesicle formation, movement, tethering and fusion. RAB25 regulates epithelial cell differentiation, proliferation and survival, thereby playing key roles in tumorigenesis. Promotes invasive migration of cells in which it functions to localize and maintain integrin alpha-V/beta-1 at the tips of extending pseudopodia. Involved in the regulation of epithelial morphogenesis through the control of CLDN4 expression and localization at tight junctions. May selectively regulate the apical recycling pathway. Together with MYO5B regulates transcytosis. This chain is Ras-related protein Rab-25, found in Mus musculus (Mouse).